The following is a 316-amino-acid chain: Glutathione synthetase (316 aa).

Residues 125–310 form the ATP-grasp domain; it reads KLFTAWFSDL…ITGMLMDAIE (186 aa). Residue 151-207 coordinates ATP; the sequence is WEKHSDIILKPLDGMGGASIFRVKEGDPNLGVIAETLTEHGTRYCMAQNYLPAIKDG. 2 residues coordinate Mg(2+): Glu281 and Asn283.

This sequence belongs to the prokaryotic GSH synthase family. As to quaternary structure, homotetramer. Mg(2+) serves as cofactor. The cofactor is Mn(2+).

It catalyses the reaction gamma-L-glutamyl-L-cysteine + glycine + ATP = glutathione + ADP + phosphate + H(+). It participates in sulfur metabolism; glutathione biosynthesis; glutathione from L-cysteine and L-glutamate: step 2/2. With respect to regulation, inhibited by 7,8-dihydrofolate, methotrexate and trimethoprim. The chain is Glutathione synthetase (gshB) from Escherichia coli (strain K12).